A 272-amino-acid polypeptide reads, in one-letter code: Alpha-tubulin N-acetyltransferase (272 aa).

The N-acetyltransferase domain maps to 1-186 (MEFRFNCHPL…NNFVVYEGFF (186 aa)). Acetyl-CoA-binding positions include 120-133 (FYVHESRQRGGLGR) and 156-165 (SEKLLGFLQK). The interval 216-244 (TTVGEQRRSSSQTRQQVVSPPVVQQPPVG) is disordered. Positions 224 to 244 (SSSQTRQQVVSPPVVQQPPVG) are enriched in low complexity.

It belongs to the acetyltransferase ATAT1 family.

It catalyses the reaction L-lysyl-[alpha-tubulin] + acetyl-CoA = N(6)-acetyl-L-lysyl-[alpha-tubulin] + CoA + H(+). Functionally, specifically acetylates 'Lys-40' in alpha-tubulin on the lumenal side of microtubules. Promotes microtubule destabilization and accelerates microtubule dynamics; this activity may be independent of acetylation activity. Acetylates alpha-tubulin with a slow enzymatic rate, due to a catalytic site that is not optimized for acetyl transfer. Enters the microtubule through each end and diffuses quickly throughout the lumen of microtubules. Acetylates only long/old microtubules because of its slow acetylation rate since it does not have time to act on dynamically unstable microtubules before the enzyme is released. The chain is Alpha-tubulin N-acetyltransferase from Aedes aegypti (Yellowfever mosquito).